Here is a 210-residue protein sequence, read N- to C-terminus: Na(+)-translocating NADH-quinone reductase subunit D (210 aa).

5 helical membrane passes run 42 to 62 (FVMT…VSLI), 72 to 92 (IIVQ…VLKA), 103 to 123 (VFVG…AFAM), 131 to 151 (LIDG…VGFF), and 178 to 198 (NGLM…IWVI).

Belongs to the NqrDE/RnfAE family. In terms of assembly, composed of six subunits; NqrA, NqrB, NqrC, NqrD, NqrE and NqrF.

It localises to the cell inner membrane. It carries out the reaction a ubiquinone + n Na(+)(in) + NADH + H(+) = a ubiquinol + n Na(+)(out) + NAD(+). This reaction is tightly coupled to the Na(+) pumping activity and specifically requires Na(+) for activity. Inhibited by korormicin and 2-N-heptyl-4-hydroxyquinoline N-oxide (HQNO). NQR complex catalyzes the reduction of ubiquinone-1 to ubiquinol by two successive reactions, coupled with the transport of Na(+) ions from the cytoplasm to the periplasm. NqrA to NqrE are probably involved in the second step, the conversion of ubisemiquinone to ubiquinol. In Vibrio alginolyticus, this protein is Na(+)-translocating NADH-quinone reductase subunit D.